Reading from the N-terminus, the 192-residue chain is Inosine triphosphate pyrophosphatase (192 aa).

8–13 (TTNLKK) lines the ITP pocket. Glutamate 34 is a binding site for Mg(2+). ITP is bound by residues lysine 46, 64 to 65 (DT), lysine 81, 141 to 144 (EGFD), lysine 164, and 169 to 170 (HR).

The protein belongs to the HAM1 NTPase family. As to quaternary structure, homodimer. The cofactor is Mg(2+). It depends on Mn(2+) as a cofactor.

It localises to the cytoplasm. The protein resides in the nucleus. The catalysed reaction is ITP + H2O = IMP + diphosphate + H(+). It catalyses the reaction dITP + H2O = dIMP + diphosphate + H(+). It carries out the reaction XTP + H2O = XMP + diphosphate + H(+). Its function is as follows. Pyrophosphatase that hydrolyzes non-canonical purine nucleotides such as inosine triphosphate (ITP), deoxyinosine triphosphate (dITP) or xanthosine 5'-triphosphate (XTP) to their respective monophosphate derivatives. The enzyme does not distinguish between the deoxy- and ribose forms. Probably excludes non-canonical purines from RNA and DNA precursor pools, thus preventing their incorporation into RNA and DNA and avoiding chromosomal lesions. This Encephalitozoon cuniculi (strain GB-M1) (Microsporidian parasite) protein is Inosine triphosphate pyrophosphatase.